A 331-amino-acid chain; its full sequence is Proton-translocating ferredoxin:NAD(+) oxidoreductase complex subunit D (331 aa).

The next 3 helical transmembrane spans lie at 23–43, 44–64, and 84–106; these read ESVSKIMWSVCLALTPAAVFG, VFNFGIHALEVIITGIIAAVV, and AFLTGLLLSMCLPPDIPPYMVAI. An FMN phosphoryl threonine modification is found at T163. 4 consecutive transmembrane segments (helical) span residues 196 to 216, 226 to 246, 251 to 271, and 273 to 293; these read NGSIGETSTILLVLGGLYLIY, VVMIGTVGILTWAFGGTTGIF, VFHMMAGGLVIGAFFMATDMV, and IPMTIKGQIIFALGAGALTSL.

This sequence belongs to the NqrB/RnfD family. As to quaternary structure, the complex is composed of six subunits: RnfA, RnfB, RnfC, RnfD, RnfE and RnfG. Requires FMN as cofactor.

It localises to the cell membrane. In terms of biological role, part of a membrane-bound complex that couples electron transfer with translocation of ions across the membrane. Couples electron transfer from reduced ferredoxin to NAD(+) with translocation of H(+) out of the cell. Essential for energy conservation during autotrophic growth. Contributes to ATP synthesis during heterotrophic growth. The polypeptide is Proton-translocating ferredoxin:NAD(+) oxidoreductase complex subunit D (Clostridium ljungdahlii (strain ATCC 55383 / DSM 13528 / PETC)).